A 288-amino-acid polypeptide reads, in one-letter code: Purine nucleoside phosphorylase (288 aa).

A phosphate-binding site is contributed by 65 to 66; the sequence is RN. Methionine 201 is a substrate binding site. Residue threonine 202 participates in phosphate binding.

The protein belongs to the PNP/MTAP phosphorylase family. MTAP subfamily. In terms of assembly, homotrimer.

Its subcellular location is the cytoplasm. It is found in the nucleus. It carries out the reaction a purine D-ribonucleoside + phosphate = a purine nucleobase + alpha-D-ribose 1-phosphate. The protein operates within purine metabolism; purine nucleoside salvage. Functionally, purine nucleoside phosphorylase involved in purine salvage. This is Purine nucleoside phosphorylase from Drosophila pseudoobscura pseudoobscura (Fruit fly).